Here is a 527-residue protein sequence, read N- to C-terminus: Protein SDS24 (527 aa).

2 stretches are compositionally biased toward low complexity: residues 1 to 22 (MASTSNTFPPSQSNSSNNLPTS) and 55 to 74 (TPPTATAAAPGPGCAATPAP). Residues 1–75 (MASTSNTFPP…PGCAATPAPL (75 aa)) are disordered. Serine 94 carries the post-translational modification Phosphoserine. CBS domains follow at residues 114–175 (IEQN…KITV), 198–256 (LTPK…NARS), 283–342 (TSRQ…QYPL), and 443–512 (LNSH…GNKE). The span at 424–447 (AQSSANGATPMSKSSSSTSLNSHS) shows a compositional bias: low complexity. 2 disordered regions span residues 424–478 (AQSS…TNTP) and 508–527 (TGNKEVDPQSARRQRGSIAM). A phosphoserine mark is found at serine 458 and serine 524.

Belongs to the SDS23 family.

It is found in the cytoplasm. Its subcellular location is the nucleus. In terms of biological role, involved in DNA replication and cell separation during budding. This chain is Protein SDS24 (SDS24), found in Saccharomyces cerevisiae (strain YJM789) (Baker's yeast).